A 339-amino-acid polypeptide reads, in one-letter code: NADH-quinone oxidoreductase subunit H (339 aa).

9 helical membrane-spanning segments follow: residues 10 to 30 (FPLT…ILCV), 50 to 70 (PNVV…KLLF), 82 to 102 (ILFI…WAVI), 115 to 135 (VGVL…IIAG), 155 to 175 (ISYE…TGTL), 187 to 207 (LPWW…ISVL), 235 to 255 (MGFA…SAMT), 275 to 295 (IPGF…FLWI), and 311 to 331 (GWKV…SVLF).

Belongs to the complex I subunit 1 family. NDH-1 is composed of 14 different subunits. Subunits NuoA, H, J, K, L, M, N constitute the membrane sector of the complex.

It localises to the cell inner membrane. It catalyses the reaction a quinone + NADH + 5 H(+)(in) = a quinol + NAD(+) + 4 H(+)(out). NDH-1 shuttles electrons from NADH, via FMN and iron-sulfur (Fe-S) centers, to quinones in the respiratory chain. The immediate electron acceptor for the enzyme in this species is believed to be ubiquinone. Couples the redox reaction to proton translocation (for every two electrons transferred, four hydrogen ions are translocated across the cytoplasmic membrane), and thus conserves the redox energy in a proton gradient. This subunit may bind ubiquinone. The chain is NADH-quinone oxidoreductase subunit H from Rickettsia typhi (strain ATCC VR-144 / Wilmington).